The sequence spans 503 residues: Annexin A11 (503 aa).

Pro residues-rich tracts occupy residues 1–17, 80–145, and 155–169; these read MSYP…PPAP, GYPP…PYPG, and SPVP…PSYP. 2 disordered regions span residues 1–35 and 56–178; these read MSYP…MPPI and AANM…GTVT. Annexin repeat units lie at residues 198–269, 270–341, 353–425, and 429–500; these read FDPL…ALMK, TPIL…SLSQ, SLVQ…AVVK, and NTPA…KICG. Lys246 and Lys253 each carry N6-acetyllysine. At Lys477 the chain carries N6-acetyllysine.

The protein belongs to the annexin family. As to quaternary structure, interacts with PDCD6 in a calcium-dependent manner. Interacts with KIF23 during cytokinesis. Interacts with S100A6.

It is found in the cytoplasm. Its subcellular location is the melanosome. The protein localises to the nucleus envelope. It localises to the nucleus. The protein resides in the nucleoplasm. It is found in the cytoskeleton. Its subcellular location is the spindle. Required for midbody formation and completion of the terminal phase of cytokinesis. Binds specifically to calcyclin in a calcium-dependent manner. The sequence is that of Annexin A11 (ANXA11) from Oryctolagus cuniculus (Rabbit).